We begin with the raw amino-acid sequence, 104 residues long: Iron-sulfur cluster assembly protein CyaY (104 aa).

This sequence belongs to the frataxin family.

Functionally, involved in iron-sulfur (Fe-S) cluster assembly. May act as a regulator of Fe-S biogenesis. The polypeptide is Iron-sulfur cluster assembly protein CyaY (Vibrio cholerae serotype O1 (strain ATCC 39541 / Classical Ogawa 395 / O395)).